A 782-amino-acid polypeptide reads, in one-letter code: Translation initiation factor IF-2 (782 aa).

The tract at residues 47–196 (DNAIDGTNKK…TPPKPKELPE (150 aa)) is disordered. Over residues 53-65 (TNKKAEAPKKETT) the composition is skewed to basic and acidic residues. A compositionally biased stretch (polar residues) spans 66 to 81 (SNENGNSKGPNKPNMT). Positions 82–93 (NSNEKSNKPNKP) are enriched in low complexity. Over residues 115-129 (KPANTSNQTQSSGNK) the composition is skewed to polar residues. Over residues 133–170 (GGQKRNNNNNSNRPGGGNPNRPGGNNRPNRGGNFNNKG) the composition is skewed to low complexity. In terms of domain architecture, tr-type G spans 283–452 (ERPPVVTIMG…LLVSEVEELK (170 aa)). Positions 292–299 (GHVDHGKT) are G1. 292–299 (GHVDHGKT) contributes to the GTP binding site. Residues 317 to 321 (GITQH) form a G2 region. Residues 338–341 (DTPG) form a G3 region. GTP is bound by residues 338–342 (DTPGH) and 392–395 (NKID). Positions 392-395 (NKID) are G4. A G5 region spans residues 428 to 430 (SAK).

Belongs to the TRAFAC class translation factor GTPase superfamily. Classic translation factor GTPase family. IF-2 subfamily.

The protein resides in the cytoplasm. In terms of biological role, one of the essential components for the initiation of protein synthesis. Protects formylmethionyl-tRNA from spontaneous hydrolysis and promotes its binding to the 30S ribosomal subunits. Also involved in the hydrolysis of GTP during the formation of the 70S ribosomal complex. This chain is Translation initiation factor IF-2, found in Listeria innocua serovar 6a (strain ATCC BAA-680 / CLIP 11262).